A 1040-amino-acid chain; its full sequence is Multidrug resistance protein MdtB (1040 aa).

12 consecutive transmembrane segments (helical) span residues 16-36 (FIMR…AGII), 347-367 (LMMA…NIPA), 369-389 (IIPG…MVFL), 396-416 (LTLM…IVVI), 440-460 (IGFT…PLLF), 472-492 (FAIT…TLTP), 537-557 (WLTL…WVFI), 863-883 (LGST…VLGI), 888-908 (FIHP…ALLA), 911-931 (IAGS…IGIV), 968-988 (ILMT…STGV), and 998-1018 (IGMV…TPVI).

It belongs to the resistance-nodulation-cell division (RND) (TC 2.A.6) family. MdtB subfamily. In terms of assembly, part of a tripartite efflux system composed of MdtA, MdtB and MdtC. MdtB forms a heteromultimer with MdtC.

The protein resides in the cell inner membrane. Its function is as follows. The MdtABC tripartite complex confers resistance against novobiocin and deoxycholate. In Escherichia fergusonii (strain ATCC 35469 / DSM 13698 / CCUG 18766 / IAM 14443 / JCM 21226 / LMG 7866 / NBRC 102419 / NCTC 12128 / CDC 0568-73), this protein is Multidrug resistance protein MdtB.